The chain runs to 567 residues: Hydroxylamine reductase 2 (567 aa).

The [4Fe-4S] cluster site is built by cysteine 5, cysteine 8, cysteine 17, and cysteine 23. 8 residues coordinate hybrid [4Fe-2O-2S] cluster: histidine 262, glutamate 286, cysteine 330, cysteine 421, cysteine 449, cysteine 474, glutamate 509, and lysine 511. The residue at position 421 (cysteine 421) is a Cysteine persulfide.

The protein belongs to the HCP family. It depends on [4Fe-4S] cluster as a cofactor. Requires hybrid [4Fe-2O-2S] cluster as cofactor.

Its subcellular location is the cytoplasm. It carries out the reaction A + NH4(+) + H2O = hydroxylamine + AH2 + H(+). Catalyzes the reduction of hydroxylamine to form NH(3) and H(2)O. The chain is Hydroxylamine reductase 2 from Clostridium acetobutylicum (strain ATCC 824 / DSM 792 / JCM 1419 / IAM 19013 / LMG 5710 / NBRC 13948 / NRRL B-527 / VKM B-1787 / 2291 / W).